Here is a 245-residue protein sequence, read N- to C-terminus: tRNA1(Val) (adenine(37)-N6)-methyltransferase (245 aa).

It belongs to the methyltransferase superfamily. tRNA (adenine-N(6)-)-methyltransferase family.

It is found in the cytoplasm. It carries out the reaction adenosine(37) in tRNA1(Val) + S-adenosyl-L-methionine = N(6)-methyladenosine(37) in tRNA1(Val) + S-adenosyl-L-homocysteine + H(+). Functionally, specifically methylates the adenine in position 37 of tRNA(1)(Val) (anticodon cmo5UAC). This chain is tRNA1(Val) (adenine(37)-N6)-methyltransferase, found in Salmonella arizonae (strain ATCC BAA-731 / CDC346-86 / RSK2980).